The chain runs to 330 residues: Aspartate--ammonia ligase (330 aa).

It belongs to the class-II aminoacyl-tRNA synthetase family. AsnA subfamily.

The protein resides in the cytoplasm. The catalysed reaction is L-aspartate + NH4(+) + ATP = L-asparagine + AMP + diphosphate + H(+). Its pathway is amino-acid biosynthesis; L-asparagine biosynthesis; L-asparagine from L-aspartate (ammonia route): step 1/1. This Enterobacter sp. (strain 638) protein is Aspartate--ammonia ligase.